We begin with the raw amino-acid sequence, 601 residues long: Serine/threonine-protein phosphatase 2A 65 kDa regulatory subunit A beta isoform (601 aa).

An N-acetylalanine modification is found at alanine 2. 15 HEAT repeats span residues 20–58 (DSLY…GVER), 59–96 (TRTE…GGPD), 97–135 (FAHC…TPVA), 136–173 (LEAH…ASNA), 174–212 (VKAE…ELDS), 213–251 (VKTE…SQDD), 252–290 (LEAL…GPKI), 291–333 (ALSD…RETV), 334–372 (IMNQ…GKEN), 373–411 (TIEH…GIRQ), 412–450 (LSQS…GVEF), 451–489 (FDEK…GTEW), 490–528 (AQNT…GKEI), 529–567 (TTKQ…DTNA), and 568–601 (LQGE…LALA).

This sequence belongs to the phosphatase 2A regulatory subunit A family. As to quaternary structure, PP2A consists of a common heterodimeric core enzyme, composed of a 36 kDa catalytic subunit (subunit C) and a 65 kDa constant regulatory subunit (PR65 or subunit A), that associates with a variety of regulatory subunits. Proteins that associate with the core dimer include three families of regulatory subunits B (the R2/B/PR55/B55, R3/B''/PR72/PR130/PR59 and R5/B'/B56 families), the 48 kDa variable regulatory subunit, viral proteins, and cell signaling molecules. Interacts with IPO9. Interacts with SGO1. Interacts with RAF1.

The PR65 subunit of protein phosphatase 2A serves as a scaffolding molecule to coordinate the assembly of the catalytic subunit and a variable regulatory B subunit. This chain is Serine/threonine-protein phosphatase 2A 65 kDa regulatory subunit A beta isoform (Ppp2r1b), found in Rattus norvegicus (Rat).